The chain runs to 286 residues: Homoserine kinase (286 aa).

Residue 78–88 coordinates ATP; that stretch reads PVAHGLGSSSS.

The protein belongs to the GHMP kinase family. Homoserine kinase subfamily.

Its subcellular location is the cytoplasm. It carries out the reaction L-homoserine + ATP = O-phospho-L-homoserine + ADP + H(+). The protein operates within amino-acid biosynthesis; L-threonine biosynthesis; L-threonine from L-aspartate: step 4/5. Functionally, catalyzes the ATP-dependent phosphorylation of L-homoserine to L-homoserine phosphate. The polypeptide is Homoserine kinase (Limosilactobacillus fermentum (strain NBRC 3956 / LMG 18251) (Lactobacillus fermentum)).